Consider the following 401-residue polypeptide: Protein nanos (401 aa).

The tract at residues 181-207 (LGRMSYGSAPPQVQMPPQQQHQQQQGL) is disordered. Residues 190-205 (PPQVQMPPQQQHQQQQ) are compositionally biased toward low complexity. Residues 318–372 (HCVFCENNNEPEAVINSHSVRDNFNRVLCPKLRTYVCPICGASGDSAHTIKYCPK) form a Nanos-type zinc finger. Zn(2+) contacts are provided by Cys-319, Cys-322, His-335, Cys-346, Cys-354, Cys-357, His-365, and Cys-370. 2 short sequence motifs (C2HC) span residues 319–346 (CVFC…RVLC) and 354–370 (CPIC…IKYC).

It belongs to the nanos family. In terms of assembly, interacts with pum and brat. Interacts with cup. Interacts with mei-P26; possibly involved in regulation of brat levels. Interacts with wh; may be involved in mei-P26-dependent derepression of the BMP signaling pathway. Acts via the formation of a quaternary complex composed of pum, nanos, brat and the 3'-UTR mRNA of hb. Binds RNA with no specificity. As to expression, posterior part of the embryo. While the transcript is present throughout the embryo, nanos translation is controlled by smg, and the protein is found in pole plasm and pole cells. In the female ovary expressed in germline stem cells, precystoblasts and in maturing cystoblasts; in early cystoblasts expression is post-transcriptionally repressed by bam in a 3'UTR-dependent manner.

Its subcellular location is the cytoplasm. It localises to the cytoplasmic ribonucleoprotein granule. In terms of biological role, maternal RNA-binding protein that is required for germ cells proliferation and self-renewal. Acts by forming a complex with pum and brat that regulates translation and mRNA stability. The complex binds to the Nanos Response Element (NRE), a 16 bp sequence in the hb mRNA 3'-UTR and prevents its translation. Controls posterior development. Rescuing factor for the abdominal defect of posterior group mutants. The other posterior group genes are not required for nanos function but rather play a role in localization or distribution of nanos protein. This Drosophila melanogaster (Fruit fly) protein is Protein nanos.